A 301-amino-acid polypeptide reads, in one-letter code: Pyridoxal 5'-phosphate synthase subunit PdxS (301 aa).

Aspartate 31 provides a ligand contact to D-ribose 5-phosphate. Lysine 88 functions as the Schiff-base intermediate with D-ribose 5-phosphate in the catalytic mechanism. Position 160 (glycine 160) interacts with D-ribose 5-phosphate. Lysine 172 serves as a coordination point for D-glyceraldehyde 3-phosphate. Residues glycine 221 and glycine 242–serine 243 each bind D-ribose 5-phosphate.

Belongs to the PdxS/SNZ family. As to quaternary structure, in the presence of PdxT, forms a dodecamer of heterodimers.

The enzyme catalyses aldehydo-D-ribose 5-phosphate + D-glyceraldehyde 3-phosphate + L-glutamine = pyridoxal 5'-phosphate + L-glutamate + phosphate + 3 H2O + H(+). It participates in cofactor biosynthesis; pyridoxal 5'-phosphate biosynthesis. Functionally, catalyzes the formation of pyridoxal 5'-phosphate from ribose 5-phosphate (RBP), glyceraldehyde 3-phosphate (G3P) and ammonia. The ammonia is provided by the PdxT subunit. Can also use ribulose 5-phosphate and dihydroxyacetone phosphate as substrates, resulting from enzyme-catalyzed isomerization of RBP and G3P, respectively. The polypeptide is Pyridoxal 5'-phosphate synthase subunit PdxS (Methanosarcina mazei (strain ATCC BAA-159 / DSM 3647 / Goe1 / Go1 / JCM 11833 / OCM 88) (Methanosarcina frisia)).